The primary structure comprises 838 residues: Glutenin, high molecular weight subunit PW212 (838 aa).

The signal sequence occupies residues 1-21; sequence MAKRLVLFVAVVVALVALTVA. The segment at 122 to 794 is disordered; the sequence is SYYPGQASPQ…GQQSGQGQQG (673 aa). Positions 125–136 are enriched in low complexity; the sequence is PGQASPQRPGQG. The segment covering 137–149 has biased composition (gly residues); that stretch reads QQPGQGQQSGQGQ. Composition is skewed to low complexity over residues 150 to 172, 179 to 208, 215 to 245, 268 to 308, 315 to 356, 364 to 416, 445 to 473, 481 to 532, 549 to 643, 654 to 677, 699 to 719, and 729 to 773; these read QGYY…GQPG, QQPG…GQPG, QLQP…PGQG, QGQQ…GQSG, QQPG…PGQG, PGYY…PGQG, SPQQ…PGQG, QGQQ…YPTS, QQPG…QGQP, GQGQ…GQPG, QQPG…GQHG, and GQGQ…GQQG.

It belongs to the gliadin/glutenin family. As to quaternary structure, disulfide-bridge linked aggregates.

Its function is as follows. Glutenins are high-molecular weight seed storage proteins of wheat endosperm. Thought to be responsible for the visco-elastic property of wheat dough. The polypeptide is Glutenin, high molecular weight subunit PW212 (Triticum aestivum (Wheat)).